Consider the following 177-residue polypeptide: MTPPSQEIVLDGPGISRALERMAHGIVARFPGEPLAIVGLLSQGDVIARRLVDKVKELGVEAQYGSIDISLYRDDIFKLEARPSLRSSNLPFSTDDMRVVLVDDVLYTGRTIRAALNALFDYGRPARIELACLIDRGGREVPIQPDYTGHVLDHAGAKVIVSMKEADGEDSVVIPSH.

The PRPP-binding signature appears at 99 to 111 (VVLVDDVLYTGRT).

It belongs to the purine/pyrimidine phosphoribosyltransferase family. PyrR subfamily.

It carries out the reaction UMP + diphosphate = 5-phospho-alpha-D-ribose 1-diphosphate + uracil. Its function is as follows. Regulates the transcription of the pyrimidine nucleotide (pyr) operon in response to exogenous pyrimidines. Functionally, also displays a weak uracil phosphoribosyltransferase activity which is not physiologically significant. In Akkermansia muciniphila (strain ATCC BAA-835 / DSM 22959 / JCM 33894 / BCRC 81048 / CCUG 64013 / CIP 107961 / Muc), this protein is Bifunctional protein PyrR.